The following is a 104-amino-acid chain: Antitoxin HigA-2 (104 aa).

Residues 45–98 form the HTH cro/C1-type domain; that stretch reads IVSIREQFNMSRGVFARLLHTSSRTLENWEQGRSVPNGQAVTLLKLVQRHPETL. A DNA-binding region (H-T-H motif) is located at residues 56 to 75; it reads RGVFARLLHTSSRTLENWEQ.

Functionally, antitoxin component of a type II toxin-antitoxin (TA) system that counteracts the effect of the HigB-2 toxin. Binds to its own promoter and regulates transcription of the higB-2/higA-2 operon. The polypeptide is Antitoxin HigA-2 (higA-2) (Vibrio cholerae serotype O1 (strain ATCC 39315 / El Tor Inaba N16961)).